We begin with the raw amino-acid sequence, 517 residues long: L-amino-acid oxidase (517 aa).

The first 18 residues, 1–18, serve as a signal peptide directing secretion; that stretch reads MNVFFMFSLLFLAALESC. Cysteines 29 and 192 form a disulfide. FAD contacts are provided by residues 62–63, 82–83, Arg90, and 106–109; these read MA, EA, and GPMR. Arg109 is a binding site for substrate. A glycan (N-linked (GlcNAc...) asparagine) is linked at Asn191. Residue Val280 participates in FAD binding. Residues Cys350 and Cys431 are joined by a disulfide bond. Residue Asn380 is glycosylated (N-linked (GlcNAc...) asparagine). Tyr391 is a binding site for substrate. Residues Glu476 and 483–488 each bind FAD; that span reads GWLDST. 483 to 484 is a binding site for substrate; that stretch reads GW.

Belongs to the flavin monoamine oxidase family. FIG1 subfamily. As to quaternary structure, homodimer; non-covalently linked. FAD is required as a cofactor. In terms of processing, N-glycosylated. Expressed by the venom gland.

Its subcellular location is the secreted. It carries out the reaction an L-alpha-amino acid + O2 + H2O = a 2-oxocarboxylate + H2O2 + NH4(+). In terms of biological role, catalyzes an oxidative deamination of predominantly hydrophobic and aromatic L-amino acids, thus producing hydrogen peroxide that may contribute to the diverse toxic effects of this enzyme. Exhibits diverse biological activities, such as hemorrhage, hemolysis, edema, apoptosis of vascular endothelial cells or tumor cell lines, antibacterial and antiparasitic activities, as well as regulation of platelet aggregation. Effects of snake L-amino oxidases on platelets are controversial, since they either induce aggregation or inhibit agonist-induced aggregation. These different effects are probably due to different experimental conditions. The polypeptide is L-amino-acid oxidase (Notechis scutatus scutatus (Mainland tiger snake)).